We begin with the raw amino-acid sequence, 168 residues long: Cell division inhibitor SulA (168 aa).

Residues 1-20 (MSTQSVSSHNIESSSFSANQ) are disordered. Residues 105–111 (ALLTGNY) form a ftsZ binding region. Residues 161 to 168 (KIHSTLYH) are lon protease binding.

Belongs to the SulA family. Interacts with FtsZ. Is rapidly cleaved and degraded by the Lon protease once DNA damage is repaired.

Its function is as follows. Component of the SOS system and an inhibitor of cell division. Accumulation of SulA causes rapid cessation of cell division and the appearance of long, non-septate filaments. In the presence of GTP, binds a polymerization-competent form of FtsZ in a 1:1 ratio, thus inhibiting FtsZ polymerization and therefore preventing it from participating in the assembly of the Z ring. This mechanism prevents the premature segregation of damaged DNA to daughter cells during cell division. The sequence is that of Cell division inhibitor SulA from Pectobacterium atrosepticum (strain SCRI 1043 / ATCC BAA-672) (Erwinia carotovora subsp. atroseptica).